A 123-amino-acid chain; its full sequence is MRYRVTTKFYVWIFHYNVTKGISKRVILLYNLKRGTSSIFRCCLCEKLNFFPVWFLFLFFIASHINILFFFFLDVLWFLWCYLCSGLFLFDVFSHLPGTLCEVQFFRLWIDGLSPIRYFIPQH.

The next 2 membrane-spanning stretches (helical) occupy residues 53–73 (VWFLFLFFIASHINILFFFFL) and 75–95 (VLWFLWCYLCSGLFLFDVFSH).

It is found in the membrane. This is an uncharacterized protein from Saccharomyces cerevisiae (strain ATCC 204508 / S288c) (Baker's yeast).